A 103-amino-acid polypeptide reads, in one-letter code: MYAVIKTGGKQYRVEVGNKLKVETLPAEVGSDIQLDQVLMIADGEAISAGAPLLDQAKVSATVVSHGRHDKIRIFKMRRRKHYRKQQGHRQNYTEIQITGISA.

The protein belongs to the bacterial ribosomal protein bL21 family. In terms of assembly, part of the 50S ribosomal subunit. Contacts protein L20.

Functionally, this protein binds to 23S rRNA in the presence of protein L20. This Nitrosomonas europaea (strain ATCC 19718 / CIP 103999 / KCTC 2705 / NBRC 14298) protein is Large ribosomal subunit protein bL21.